The chain runs to 475 residues: MSPQTETKASVGFKAGVKEYKLTYYTPEYETKDTDILAAFRVTPQPGVPPEEAGAAVAAESSTGTWTTVWTDGLTSLDRYKGRCYHIEPVPGEEDQFIAYVAYPLDLFEEGSVTNMFTSIVGNVFGFKALRALRLEDLRIPIAYVKTFEGPPHGIQVERDKLNKYGRPLLGCTIKPKLGLSAKNYGRACYECLRGGLDFTKDDENVNSQPFMRWRDRFLFCAEAIYKAQAETGEIKGHYLNATAGNCEEMIKRAVFARELGVPIVMHDYLTGGFTANTSLSHYCRDNGLLLHIHRAMHAVIDRQKNHGMHFRVLAKALRMSGGDHIHSGTVVGKLEGERDITLGFVDLLRDDYIEKDRSRGIYFTQDWVSMPGVLPVRSGGIHVWHMPALTDIFGDDSVLQFGGGTLGHPWGNAPGAVANRVALEACVKARNEGRNLASEGNEIIREAAKWSPELAAACEVWKEIKFIFAAVDTL.

Positions 1-2 (MS) are excised as a propeptide. Residue proline 3 is modified to N-acetylproline. Lysine 14 is subject to N6,N6,N6-trimethyllysine. Residues asparagine 123 and threonine 173 each coordinate substrate. Lysine 175 (proton acceptor) is an active-site residue. Lysine 177 is a substrate binding site. Mg(2+)-binding residues include lysine 201, aspartate 203, and glutamate 204. Lysine 201 is subject to N6-carboxylysine. Histidine 294 functions as the Proton acceptor in the catalytic mechanism. Residues arginine 295, histidine 327, and serine 379 each contribute to the substrate site.

Belongs to the RuBisCO large chain family. Type I subfamily. In terms of assembly, heterohexadecamer of 8 large chains and 8 small chains; disulfide-linked. The disulfide link is formed within the large subunit homodimers. Requires Mg(2+) as cofactor. In terms of processing, the disulfide bond which can form in the large chain dimeric partners within the hexadecamer appears to be associated with oxidative stress and protein turnover.

It localises to the plastid. The protein resides in the chloroplast. The enzyme catalyses 2 (2R)-3-phosphoglycerate + 2 H(+) = D-ribulose 1,5-bisphosphate + CO2 + H2O. It carries out the reaction D-ribulose 1,5-bisphosphate + O2 = 2-phosphoglycolate + (2R)-3-phosphoglycerate + 2 H(+). Functionally, ruBisCO catalyzes two reactions: the carboxylation of D-ribulose 1,5-bisphosphate, the primary event in carbon dioxide fixation, as well as the oxidative fragmentation of the pentose substrate in the photorespiration process. Both reactions occur simultaneously and in competition at the same active site. In Bouvardia ternifolia (Firecrackerbush), this protein is Ribulose bisphosphate carboxylase large chain.